The following is a 453-amino-acid chain: Ethanolamine ammonia-lyase large subunit (453 aa).

Substrate contacts are provided by residues 160-162 (RLQ) and asparagine 193. Residues proline 194 and glutamine 246 each contribute to the adenosylcob(III)alamin site. Glutamate 287 provides a ligand contact to substrate. Serine 295 lines the adenosylcob(III)alamin pocket. Residue aspartate 362 participates in substrate binding. Methionine 401 contacts adenosylcob(III)alamin.

The protein belongs to the EutB family. The basic unit is a heterodimer which dimerizes to form tetramers. The heterotetramers trimerize; 6 large subunits form a core ring with 6 small subunits projecting outwards. It depends on adenosylcob(III)alamin as a cofactor.

Its subcellular location is the bacterial microcompartment. It catalyses the reaction ethanolamine = acetaldehyde + NH4(+). It participates in amine and polyamine degradation; ethanolamine degradation. Catalyzes the deamination of various vicinal amino-alcohols to oxo compounds. Allows this organism to utilize ethanolamine as the sole source of nitrogen and carbon in the presence of vitamin B12. The polypeptide is Ethanolamine ammonia-lyase large subunit (Escherichia coli O157:H7).